The sequence spans 214 residues: dITP/XTP pyrophosphatase (214 aa).

13-18 is a binding site for substrate; the sequence is SHNAGK. Residues Asp45 and Asp74 each contribute to the Mg(2+) site. Residue Asp74 is the Proton acceptor of the active site. Residues Ser75, 163–166, Lys186, and 199–200 each bind substrate; these read FGYD and HR.

It belongs to the HAM1 NTPase family. As to quaternary structure, homodimer. The cofactor is Mg(2+).

The catalysed reaction is XTP + H2O = XMP + diphosphate + H(+). It carries out the reaction dITP + H2O = dIMP + diphosphate + H(+). The enzyme catalyses ITP + H2O = IMP + diphosphate + H(+). Its function is as follows. Pyrophosphatase that catalyzes the hydrolysis of nucleoside triphosphates to their monophosphate derivatives, with a high preference for the non-canonical purine nucleotides XTP (xanthosine triphosphate), dITP (deoxyinosine triphosphate) and ITP. Seems to function as a house-cleaning enzyme that removes non-canonical purine nucleotides from the nucleotide pool, thus preventing their incorporation into DNA/RNA and avoiding chromosomal lesions. The protein is dITP/XTP pyrophosphatase of Rhizobium meliloti (strain 1021) (Ensifer meliloti).